The following is a 260-amino-acid chain: Tryptophan synthase alpha chain (260 aa).

Active-site proton acceptor residues include Glu-52 and Asp-63.

It belongs to the TrpA family. As to quaternary structure, tetramer of two alpha and two beta chains.

It carries out the reaction (1S,2R)-1-C-(indol-3-yl)glycerol 3-phosphate + L-serine = D-glyceraldehyde 3-phosphate + L-tryptophan + H2O. It functions in the pathway amino-acid biosynthesis; L-tryptophan biosynthesis; L-tryptophan from chorismate: step 5/5. The alpha subunit is responsible for the aldol cleavage of indoleglycerol phosphate to indole and glyceraldehyde 3-phosphate. In Streptococcus mutans serotype c (strain ATCC 700610 / UA159), this protein is Tryptophan synthase alpha chain.